The primary structure comprises 866 residues: Ribosome biogenesis protein BOP1 homolog (866 aa).

Disordered regions lie at residues 1 to 180 (MVAN…EETR) and 214 to 241 (PPEA…EEDI). 3 stretches are compositionally biased toward acidic residues: residues 37-52 (VDDE…DEEN), 60-146 (GNDE…LEEP), and 167-179 (TAED…DEET). WD repeat units lie at residues 527 to 566 (GHTD…CIRT), 568 to 608 (PTGD…SLLV), 697 to 735 (KSKG…LLKK), 738 to 777 (PSCK…RPYQ), 781 to 820 (LHHS…DLLQ), and 836 to 866 (VNDF…RLYT).

This sequence belongs to the WD repeat BOP1/ERB1 family.

The protein localises to the nucleus. The protein resides in the nucleolus. It localises to the nucleoplasm. Its function is as follows. Required for maturation of ribosomal RNAs and formation of the large ribosomal subunit. In Aedes aegypti (Yellowfever mosquito), this protein is Ribosome biogenesis protein BOP1 homolog.